The primary structure comprises 514 residues: MALSELALVRWLQESRRSRKLILFIVFLALLLDNMLLTVVVPIIPSYLYSIKHEKNATEIQTARPVHTASISDSFQSIFSYYDNSTMVTGNATRDLTLHQTATQHMVTNASAVPSDCPSEDKDLLNENVQVGLLFASKATVQLITNPFIGLLTNRIGYPIPIFAGFCIMFVSTIMFAFSSSYAFLLIARSLQGIGSSCSSVAGMGMLASVYTDDEERGNVMGIALGGLAMGVLVGPPFGSVLYEFVGKTAPFLVLAALVLLDGAIQLFVLQPSRVQPESQKGTPLTTLLKDPYILIAAGSICFANMGIAMLEPALPIWMMETMCSRKWQLGVAFLPASISYLIGTNIFGILAHKMGRWLCALLGMIIVGVSILCIPFAKNIYGLIAPNFGVGFAIGMVDSSMMPIMGYLVDLRHVSVYGSVYAIADVAFCMGYAIGPSAGGAIAKAIGFPWLMTIIGIIDILFAPLCFFLRSPPAKEEKMAILMDHNCPIKTKMYTQNNIQSYPIGEDEESESD.

Topologically, residues 1–20 (MALSELALVRWLQESRRSRK) are cytoplasmic. The chain crosses the membrane as a helical span at residues 21-41 (LILFIVFLALLLDNMLLTVVV). The Lumenal, vesicle portion of the chain corresponds to 42 to 129 (PIIPSYLYSI…EDKDLLNENV (88 aa)). N-linked (GlcNAc...) asparagine glycans are attached at residues Asn-84 and Asn-91. An intrachain disulfide couples Cys-117 to Cys-324. Residues 130-150 (QVGLLFASKATVQLITNPFIG) form a helical membrane-spanning segment. Over 151–159 (LLTNRIGYP) the chain is Cytoplasmic. The helical transmembrane segment at 160-180 (IPIFAGFCIMFVSTIMFAFSS) threads the bilayer. Over 181–189 (SYAFLLIAR) the chain is Lumenal, vesicle. The chain crosses the membrane as a helical span at residues 190 to 210 (SLQGIGSSCSSVAGMGMLASV). Residues 211–219 (YTDDEERGN) are Cytoplasmic-facing. The helical transmembrane segment at 220 to 242 (VMGIALGGLAMGVLVGPPFGSVL) threads the bilayer. Positions 228 and 232 each coordinate serotonin. The Lumenal, vesicle portion of the chain corresponds to 243–248 (YEFVGK). A helical transmembrane segment spans residues 249–271 (TAPFLVLAALVLLDGAIQLFVLQ). Residues 272–291 (PSRVQPESQKGTPLTTLLKD) are Cytoplasmic-facing. The helical transmembrane segment at 292–311 (PYILIAAGSICFANMGIAML) threads the bilayer. Positions 305, 308, 312, 334, and 341 each coordinate serotonin. The Lumenal, vesicle segment spans residues 312 to 328 (EPALPIWMMETMCSRKW). The helical transmembrane segment at 329 to 352 (QLGVAFLPASISYLIGTNIFGILA) threads the bilayer. Residues 353-357 (HKMGR) are Cytoplasmic-facing. A helical transmembrane segment spans residues 358–378 (WLCALLGMIIVGVSILCIPFA). Residues 379-389 (KNIYGLIAPNF) are Lumenal, vesicle-facing. The chain crosses the membrane as a helical span at residues 390–410 (GVGFAIGMVDSSMMPIMGYLV). Asp-399 lines the serotonin pocket. The Cytoplasmic portion of the chain corresponds to 411-414 (DLRH). A helical membrane pass occupies residues 415-435 (VSVYGSVYAIADVAFCMGYAI). Tyr-433 contributes to the serotonin binding site. At 436–440 (GPSAG) the chain is on the lumenal, vesicle side. Residues 441-462 (GAIAKAIGFPWLMTIIGIIDIL) traverse the membrane as a helical segment. Topologically, residues 463–514 (FAPLCFFLRSPPAKEEKMAILMDHNCPIKTKMYTQNNIQSYPIGEDEESESD) are cytoplasmic. A phosphoserine mark is found at Ser-511 and Ser-513.

This sequence belongs to the major facilitator superfamily. Vesicular transporter family. Interacts with SLC6A3. As to expression, expressed in neuronal and neuroendocrine tissues. Detected in central and peripheral nervous system in particular in axonal and dendritic processes in dopaminergic cells of substantia nigra, histaminergic neuronal cell bodies of substantia nigra and tuberomammillary nucleus, in ganglion cells of sympathetic glia and in peripheral sympathetic nerve terminals in stomach and duodenum (at protein level). Highly expressed in chromaffin cells of the adrenal medulla and histamine-storing enterochromaffin-like cells of oxyntic mucosa (at protein level).

It localises to the cytoplasmic vesicle. It is found in the secretory vesicle. The protein localises to the synaptic vesicle membrane. The protein resides in the secretory vesicle membrane. Its subcellular location is the cell projection. It localises to the axon. It is found in the dendrite. It carries out the reaction serotonin(in) + 2 H(+)(out) = serotonin(out) + 2 H(+)(in). It catalyses the reaction dopamine(in) + 2 H(+)(out) = dopamine(out) + 2 H(+)(in). The enzyme catalyses histamine(in) + 2 H(+)(out) = histamine(out) + 2 H(+)(in). Strongly inhibited by reserpine and tetrabenazine. Also inhibited to a lesser extent by ketanserin and fenfluramine. Reserpine and ketanserin inhibit by blocking the substrate-binding pocket. Tetrabenazine traps SLC18A2/VMAT2 in an occluded conformation and its inhibition is specific to SLC18A2/VMAT2 but not SLC18A1/VMAT1. Functionally, electrogenic antiporter that exchanges one cationic monoamine with two intravesicular protons across the membrane of secretory and synaptic vesicles. Uses the electrochemical proton gradient established by the V-type proton-pump ATPase to accumulate high concentrations of monoamines inside the vesicles prior to their release via exocytosis. Transports a variety of catecholamines such as dopamine, adrenaline and noradrenaline, histamine, and indolamines such as serotonin. Regulates the transvesicular monoaminergic gradient that determines the quantal size. Mediates somatodendritic dopamine release in hippocampal neurons, likely as part of a regulated secretory pathway that integrates retrograde synaptic signals. Acts as a primary transporter for striatal dopamine loading ensuring impulse-dependent release of dopamine at the synaptic cleft. Responsible for histamine and serotonin storage and subsequent corelease from mast cell granules. The chain is Synaptic vesicular amine transporter (SLC18A2) from Homo sapiens (Human).